We begin with the raw amino-acid sequence, 88 residues long: Small ribosomal subunit protein bS20 (88 aa).

The tract at residues 1–27 (MANTKQAQKRARQAEQRRQHNASQRSM) is disordered.

Belongs to the bacterial ribosomal protein bS20 family.

In terms of biological role, binds directly to 16S ribosomal RNA. The chain is Small ribosomal subunit protein bS20 from Chromohalobacter salexigens (strain ATCC BAA-138 / DSM 3043 / CIP 106854 / NCIMB 13768 / 1H11).